The following is a 251-amino-acid chain: Phosphate import ATP-binding protein PstB 2 (251 aa).

An ABC transporter domain is found at 5–246; that stretch reads ITSKDVHLSY…PKKQITSDYL (242 aa). An ATP-binding site is contributed by 37–44; it reads GPSGCGKS.

Belongs to the ABC transporter superfamily. Phosphate importer (TC 3.A.1.7) family. The complex is composed of two ATP-binding proteins (PstB), two transmembrane proteins (PstC and PstA) and a solute-binding protein (PstS).

The protein resides in the cell membrane. It catalyses the reaction phosphate(out) + ATP + H2O = ADP + 2 phosphate(in) + H(+). Its function is as follows. Part of the ABC transporter complex PstSACB involved in phosphate import. Responsible for energy coupling to the transport system. This is Phosphate import ATP-binding protein PstB 2 from Lactobacillus johnsonii (strain CNCM I-12250 / La1 / NCC 533).